We begin with the raw amino-acid sequence, 1024 residues long: NLR family CARD domain-containing protein 4 (1024 aa).

A CARD domain is found at 1-88 (MNFIKDNSRA…PLFQDLNGQS (88 aa)). The segment at 95-298 (EGDLDDLAQD…QFGALTAEVG (204 aa)) is nucleotide-binding domain (NBD). The NACHT domain maps to 163–476 (SPCIIEGESG…VTKGNGYLQK (314 aa)). 169-176 (GESGKGKS) contacts ATP. A winged-helix domain (WHD) region spans residues 356 to 463 (SHTQTTLFHT…RLSSLLTSHE (108 aa)). Residue S533 is modified to Phosphoserine. 12 LRR repeats span residues 578 to 598 (FFQGKSLYINSGNIPDYLFDF), 656 to 679 (KQEFRTLEVTLRDFSKLNKQDIRY), 735 to 758 (VTNLKTLSIHDLQNQRLPGGLTDS), 762 to 785 (LKNLTKLIMDNIKMNEEDAIKLAE), 787 to 812 (LKNLKKMCLFHLTHLSDIGEGMDYIV), 824 to 847 (EIQLVSCCLSANAVKILAQNLHNL), 848 to 870 (VKLSILDLSENYLEKDGNEALHE), 878 to 902 (LEQLTALMLPWGCDVQGSLSSLLKH), 911 to 933 (KLGLKNWRLTDTEIRILGAFFGK), 936 to 963 (LKNFQQLNLAGNRVSSDGWLAFMGVFEN), 965 to 985 (KQLVFFDFSTKEFLPDPALVR), and 999 to 1021 (EARLVGWQFDDDDLSVITGAFKL).

Homooligomer; homooligomerizes to induce formation of the NLRC4 inflammasome. Homooligomerizes following activation by pathogenic proteins. Component of the NLRC4 inflammasome, at least composed of NLRC4 and caspase-1 (CASP1). Some NLRC4 inflammasomes contain PYCARD/ASC, while some others directly contact and activate CASP1. Interacts (via CARD domain) with PYCARD/ASC, pro-caspase-1 (CASP1), NOD2, BCL10 and NALP1 (NAC) by CARD-CARD interaction. Interacts with EIF2AK2/PKR. Post-translationally, phosphorylated at Ser-533 following infection of macrophages with S.typhimurium (Salmonella). Phosphorylation is essential for NLRC4 inflammasome function to promote caspase-1 activation and pyroptosis. PRKCD phosphorylates Ser-533 in vitro. Isoform 2 is expressed ubiquitously, although highly expressed in lung and spleen. Isoform 1 is highly expressed in lung, followed by leukocytes especially monocytes, lymph node, colon, brain, prostate, placenta, spleen, bone marrow and fetal liver. Isoform 4 is only detected in brain.

It is found in the cytoplasm. It localises to the cytosol. Its subcellular location is the inflammasome. Its function is as follows. Key component of inflammasomes that indirectly senses specific proteins from pathogenic bacteria and fungi and responds by assembling an inflammasome complex that promotes caspase-1 activation, cytokine production and macrophage pyroptosis. The NLRC4 inflammasome is activated as part of the innate immune response to a range of intracellular bacteria. The chain is NLR family CARD domain-containing protein 4 (NLRC4) from Homo sapiens (Human).